A 471-amino-acid chain; its full sequence is Glutamate--tRNA ligase 1 (471 aa).

A 'HIGH' region motif is present at residues 10–20; sequence PSPTGFLHIGG. Residues 113–140 are disordered; the sequence is ARKEGRPPRYDGRWRDRDPSEAPKDRDP. The short motif at 239 to 243 is the 'KMSKS' region element; it reads KLSKR. Lys242 contributes to the ATP binding site.

Belongs to the class-I aminoacyl-tRNA synthetase family. Glutamate--tRNA ligase type 1 subfamily. As to quaternary structure, monomer.

The protein resides in the cytoplasm. The enzyme catalyses tRNA(Glu) + L-glutamate + ATP = L-glutamyl-tRNA(Glu) + AMP + diphosphate. Catalyzes the attachment of glutamate to tRNA(Glu) in a two-step reaction: glutamate is first activated by ATP to form Glu-AMP and then transferred to the acceptor end of tRNA(Glu). The chain is Glutamate--tRNA ligase 1 from Xanthobacter autotrophicus (strain ATCC BAA-1158 / Py2).